A 271-amino-acid chain; its full sequence is Chitinase 6 (271 aa).

The signal sequence occupies residues 1 to 20; it reads MARRLSLLAVVLAMVAAVSA. Residues 25–60 enclose the Chitin-binding type-1 domain; the sequence is AQSCGCASDQCCSKWGFCGTGSDYCGTGCQAGPCDV. Cystine bridges form between C28–C36, C30–C42, C35–C49, C88–C137, C150–C159, and C239–C271. E132 acts as the Proton donor in catalysis. N268 carries N-linked (GlcNAc...) asparagine glycosylation.

Belongs to the glycosyl hydrolase 19 family. Chitinase class IV subfamily. Expressed in roots, leaves, sheaths and meristems.

The catalysed reaction is Random endo-hydrolysis of N-acetyl-beta-D-glucosaminide (1-&gt;4)-beta-linkages in chitin and chitodextrins.. Its function is as follows. May function in reproductive organs during embryogenesis and seed maturation. This Oryza sativa subsp. japonica (Rice) protein is Chitinase 6 (Cht6).